The sequence spans 145 residues: Large ribosomal subunit protein uL15 (145 aa).

The segment at 1-54 is disordered; that stretch reads MKLNELKYTPGSKKEATRVGRGMASGKGKTATRGHKGQNSRSGGGVRPGFEGGQ. Gly residues predominate over residues 42 to 52; it reads SGGGVRPGFEG.

The protein belongs to the universal ribosomal protein uL15 family. In terms of assembly, part of the 50S ribosomal subunit.

Binds to the 23S rRNA. This Mycoplasma capricolum subsp. capricolum (strain California kid / ATCC 27343 / NCTC 10154) protein is Large ribosomal subunit protein uL15.